A 346-amino-acid polypeptide reads, in one-letter code: Holliday junction branch migration complex subunit RuvB (346 aa).

The segment covering 1–11 (MTEQRTIASSA) has biased composition (polar residues). Residues 1–20 (MTEQRTIASSATREDEAADA) are disordered. Residues 1–183 (MTEQRTIASS…FGIVQRLEFY (183 aa)) form a large ATPase domain (RuvB-L) region. ATP contacts are provided by residues Ile22, Arg23, Gly64, Lys67, Thr68, Thr69, 130–132 (EDF), Arg173, Tyr183, and Arg220. Thr68 is a binding site for Mg(2+). The tract at residues 184–254 (SPQELTRIVI…VAQAAMQMLK (71 aa)) is small ATPAse domain (RuvB-S). The interval 257–346 (PEGFDELDRR…PAIGEPGDLF (90 aa)) is head domain (RuvB-H). Arg293, Arg312, and Arg317 together coordinate DNA.

Belongs to the RuvB family. In terms of assembly, homohexamer. Forms an RuvA(8)-RuvB(12)-Holliday junction (HJ) complex. HJ DNA is sandwiched between 2 RuvA tetramers; dsDNA enters through RuvA and exits via RuvB. An RuvB hexamer assembles on each DNA strand where it exits the tetramer. Each RuvB hexamer is contacted by two RuvA subunits (via domain III) on 2 adjacent RuvB subunits; this complex drives branch migration. In the full resolvosome a probable DNA-RuvA(4)-RuvB(12)-RuvC(2) complex forms which resolves the HJ.

The protein resides in the cytoplasm. The enzyme catalyses ATP + H2O = ADP + phosphate + H(+). Its function is as follows. The RuvA-RuvB-RuvC complex processes Holliday junction (HJ) DNA during genetic recombination and DNA repair, while the RuvA-RuvB complex plays an important role in the rescue of blocked DNA replication forks via replication fork reversal (RFR). RuvA specifically binds to HJ cruciform DNA, conferring on it an open structure. The RuvB hexamer acts as an ATP-dependent pump, pulling dsDNA into and through the RuvAB complex. RuvB forms 2 homohexamers on either side of HJ DNA bound by 1 or 2 RuvA tetramers; 4 subunits per hexamer contact DNA at a time. Coordinated motions by a converter formed by DNA-disengaged RuvB subunits stimulates ATP hydrolysis and nucleotide exchange. Immobilization of the converter enables RuvB to convert the ATP-contained energy into a lever motion, pulling 2 nucleotides of DNA out of the RuvA tetramer per ATP hydrolyzed, thus driving DNA branch migration. The RuvB motors rotate together with the DNA substrate, which together with the progressing nucleotide cycle form the mechanistic basis for DNA recombination by continuous HJ branch migration. Branch migration allows RuvC to scan DNA until it finds its consensus sequence, where it cleaves and resolves cruciform DNA. This is Holliday junction branch migration complex subunit RuvB from Xanthomonas campestris pv. campestris (strain 8004).